A 93-amino-acid chain; its full sequence is Probable Fe(2+)-trafficking protein (93 aa).

Belongs to the Fe(2+)-trafficking protein family.

Could be a mediator in iron transactions between iron acquisition and iron-requiring processes, such as synthesis and/or repair of Fe-S clusters in biosynthetic enzymes. This is Probable Fe(2+)-trafficking protein from Polaromonas naphthalenivorans (strain CJ2).